The sequence spans 195 residues: MMRFLILATNNQGKLQELRRLLAGTGWVVQAAPPDFAVEETGTTFAENARLKALAAAERTGEWSVGDDSGLAVDALGGAPGVYSARYGRNDGERISRLLAALAGQADRGARFICAIALAEPGRVLKEVEAECRGVILHAPRGNGGFGYDPIFLVPELDKTFAELDIVEKERHSHRGRAVRKLLSGCSRGTFIVDH.

9 to 14 (TNNQGK) is a binding site for substrate. Mg(2+) contacts are provided by Glu39 and Asp68. Residue Asp68 is the Proton acceptor of the active site. Substrate contacts are provided by residues Ser69, 146 to 149 (FGYD), Lys169, and 174 to 175 (HR).

The protein belongs to the HAM1 NTPase family. In terms of assembly, homodimer. The cofactor is Mg(2+).

It carries out the reaction XTP + H2O = XMP + diphosphate + H(+). The catalysed reaction is dITP + H2O = dIMP + diphosphate + H(+). The enzyme catalyses ITP + H2O = IMP + diphosphate + H(+). In terms of biological role, pyrophosphatase that catalyzes the hydrolysis of nucleoside triphosphates to their monophosphate derivatives, with a high preference for the non-canonical purine nucleotides XTP (xanthosine triphosphate), dITP (deoxyinosine triphosphate) and ITP. Seems to function as a house-cleaning enzyme that removes non-canonical purine nucleotides from the nucleotide pool, thus preventing their incorporation into DNA/RNA and avoiding chromosomal lesions. This Gloeobacter violaceus (strain ATCC 29082 / PCC 7421) protein is dITP/XTP pyrophosphatase.